The chain runs to 257 residues: Putative cysteine-rich repeat secretory protein 28 (257 aa).

An N-terminal signal peptide occupies residues 1 to 26; it reads MFSTFGSVPILTVVAIQLFLIRNVLS. Gnk2-homologous domains follow at residues 32 to 136 and 142 to 254; these read AYLH…TVDS and YEND…LYPF.

It belongs to the cysteine-rich repeat secretory protein family.

It localises to the secreted. The sequence is that of Putative cysteine-rich repeat secretory protein 28 (CRRSP28) from Arabidopsis thaliana (Mouse-ear cress).